Reading from the N-terminus, the 67-residue chain is Large ribosomal subunit protein bL31 (67 aa).

Belongs to the bacterial ribosomal protein bL31 family. Type A subfamily. As to quaternary structure, part of the 50S ribosomal subunit.

In terms of biological role, binds the 23S rRNA. The polypeptide is Large ribosomal subunit protein bL31 (Wolinella succinogenes (strain ATCC 29543 / DSM 1740 / CCUG 13145 / JCM 31913 / LMG 7466 / NCTC 11488 / FDC 602W) (Vibrio succinogenes)).